Here is a 402-residue protein sequence, read N- to C-terminus: Rubredoxin-oxygen oxidoreductase (402 aa).

The segment at 30–216 (PMGTTYNAYL…KAIETLVGAG (187 aa)) is zinc metallo-hydrolase. Residues His79, Glu81, Asp83, His146, Asp165, and His226 each contribute to the Fe cation site. Residues 255 to 393 (VVIFYDSMWH…QLKTMAQTIA (139 aa)) enclose the Flavodoxin-like domain.

It in the N-terminal section; belongs to the zinc metallo-hydrolase group 3 family. Homodimer. Requires FMN as cofactor. Fe cation is required as a cofactor.

It participates in energy metabolism; electron transfer. Catalyzes the four-electron reduction of one oxygen molecule to two water molecules. In Megalodesulfovibrio gigas (strain ATCC 19364 / DSM 1382 / NCIMB 9332 / VKM B-1759) (Desulfovibrio gigas), this protein is Rubredoxin-oxygen oxidoreductase (roo).